Reading from the N-terminus, the 66-residue chain is Large ribosomal subunit protein uL29 (66 aa).

It belongs to the universal ribosomal protein uL29 family.

The sequence is that of Large ribosomal subunit protein uL29 from Borreliella afzelii (strain PKo) (Borrelia afzelii).